The sequence spans 548 residues: Chaperonin GroEL (548 aa).

Residues 30–33 (TLGP), K51, 87–91 (DGTTT), G415, and D495 each bind ATP.

Belongs to the chaperonin (HSP60) family. Forms a cylinder of 14 subunits composed of two heptameric rings stacked back-to-back. Interacts with the co-chaperonin GroES.

The protein localises to the cytoplasm. It catalyses the reaction ATP + H2O + a folded polypeptide = ADP + phosphate + an unfolded polypeptide.. Functionally, together with its co-chaperonin GroES, plays an essential role in assisting protein folding. The GroEL-GroES system forms a nano-cage that allows encapsulation of the non-native substrate proteins and provides a physical environment optimized to promote and accelerate protein folding. The chain is Chaperonin GroEL from Photorhabdus laumondii subsp. laumondii (strain DSM 15139 / CIP 105565 / TT01) (Photorhabdus luminescens subsp. laumondii).